The chain runs to 555 residues: Protein PLASTID TRANSCRIPTIONALLY ACTIVE 12, chloroplastic (555 aa).

Residues methionine 1 to lysine 58 constitute a chloroplast transit peptide. Disordered regions lie at residues tyrosine 80–glycine 100, alanine 115–valine 167, and serine 468–serine 541. A compositionally biased stretch (polar residues) spans glutamine 144–alanine 154. Composition is skewed to acidic residues over residues glutamate 471–valine 480 and leucine 490–glutamate 502. The segment covering asparagine 508 to glutamine 519 has biased composition (polar residues). Residues glutamate 521–isoleucine 538 show a composition bias toward basic and acidic residues.

In terms of assembly, component of the plastid-encoded plastid RNA polymerase (PEP) complex.

The protein resides in the plastid. It localises to the chloroplast stroma. Its subcellular location is the nucleus. Its function is as follows. Required for the activity of the plastid-encoded RNA polymerase (PEP) and full expression of genes transcribed by PEP. Required for the proper build-up and formation of the PEP-complex. Binds single-stranded (ss) DNA and RNA, but not double-stranded (ds) DNA. The chain is Protein PLASTID TRANSCRIPTIONALLY ACTIVE 12, chloroplastic from Zea mays (Maize).